Reading from the N-terminus, the 491-residue chain is Probable cytosol aminopeptidase (491 aa).

Positions 263 and 268 each coordinate Mn(2+). K275 is an active-site residue. Mn(2+) is bound by residues D286, D345, and E347. R349 is an active-site residue.

It belongs to the peptidase M17 family. It depends on Mn(2+) as a cofactor.

The protein resides in the cytoplasm. The catalysed reaction is Release of an N-terminal amino acid, Xaa-|-Yaa-, in which Xaa is preferably Leu, but may be other amino acids including Pro although not Arg or Lys, and Yaa may be Pro. Amino acid amides and methyl esters are also readily hydrolyzed, but rates on arylamides are exceedingly low.. It catalyses the reaction Release of an N-terminal amino acid, preferentially leucine, but not glutamic or aspartic acids.. Presumably involved in the processing and regular turnover of intracellular proteins. Catalyzes the removal of unsubstituted N-terminal amino acids from various peptides. In Haemophilus influenzae (strain PittEE), this protein is Probable cytosol aminopeptidase.